Consider the following 100-residue polypeptide: Urease subunit gamma (100 aa).

The protein belongs to the urease gamma subunit family. Heterotrimer of UreA (gamma), UreB (beta) and UreC (alpha) subunits. Three heterotrimers associate to form the active enzyme.

It is found in the cytoplasm. It catalyses the reaction urea + 2 H2O + H(+) = hydrogencarbonate + 2 NH4(+). It participates in nitrogen metabolism; urea degradation; CO(2) and NH(3) from urea (urease route): step 1/1. The protein is Urease subunit gamma of Nitrosococcus oceani (strain ATCC 19707 / BCRC 17464 / JCM 30415 / NCIMB 11848 / C-107).